Consider the following 367-residue polypeptide: Endophilin-A2 (367 aa).

A membrane-binding amphipathic helix region spans residues 1-21 (MSVAGLKKQFYKASQLVSEKV). In terms of domain architecture, BAR spans 18 to 249 (SEKVGGAEGT…LKRRMREASS (232 aa)). The segment at 60-87 (PNPASRAKLTMLNTMSKIRGQVKNPGYP) is required for dimerization upon membrane association. A coiled-coil region spans residues 181–250 (EELRQAMEKF…KRRMREASSR (70 aa)). An interaction with ARC region spans residues 218-254 (LVDAQLDYHRQAVQILDELAEKLKRRMREASSRPRRE). The tract at residues 243 to 293 (RMREASSRPRREYKPKPRETYDFGESDQSNGGFSCTPTPKVSASSSFRSDK) is disordered. Residues 245 to 263 (REASSRPRREYKPKPRETY) show a composition bias toward basic and acidic residues. The span at 268–289 (SDQSNGGFSCTPTPKVSASSSF) shows a compositional bias: polar residues. The 60-residue stretch at 305–364 (LDQPCCKALYDFEPENDGELGFKEGDIITLTNQIDENWYEGMINGQSGFFPLNYVEVLVP) folds into the SH3 domain.

Belongs to the endophilin family. In terms of assembly, interacts with ARC. Interacts with SYNJ1 and DNM1. As to expression, highest level in central region of the theca of developing follicles (at protein level). Expressed at highest level in brain and testis, at high level in kidney, lung and stroma, low level in spleen and adrenal gland (at protein level). Expressed in most tissue with highest levels in small ovarian follicles, brain and testis.

It is found in the cytoplasm. It localises to the early endosome membrane. The protein resides in the cell projection. Its subcellular location is the podosome. Functionally, implicated in endocytosis. May recruit other proteins to membranes with high curvature. In Gallus gallus (Chicken), this protein is Endophilin-A2.